A 236-amino-acid polypeptide reads, in one-letter code: (5-formylfuran-3-yl)methyl phosphate synthase (236 aa).

Lys-27 serves as the catalytic Schiff-base intermediate with substrate. Lys-85 functions as the Proton acceptor in the catalytic mechanism.

The protein belongs to the MfnB family.

It catalyses the reaction 2 D-glyceraldehyde 3-phosphate = 4-(hydroxymethyl)-2-furancarboxaldehyde phosphate + phosphate + 2 H2O. The protein operates within cofactor biosynthesis; methanofuran biosynthesis. Catalyzes the formation of 4-(hydroxymethyl)-2-furancarboxaldehyde phosphate (4-HFC-P) from two molecules of glyceraldehyde-3-P (GA-3-P). The chain is (5-formylfuran-3-yl)methyl phosphate synthase from Methanococcus maripaludis (strain C6 / ATCC BAA-1332).